Reading from the N-terminus, the 114-residue chain is T cell receptor alpha variable 3 (114 aa).

The first 20 residues, 1–20 (MASAPISMLAMLFTLSGLRA), serve as a signal peptide directing secretion. Residues 21–114 (QSVAQPEDQV…SALYFCAVRD (94 aa)) form the Ig-like domain. An intrachain disulfide couples cysteine 42 to cysteine 110. Asparagine 87 carries an N-linked (GlcNAc...) asparagine glycan.

In terms of assembly, alpha-beta TR is a heterodimer composed of an alpha and beta chain; disulfide-linked. The alpha-beta TR is associated with the transmembrane signaling CD3 coreceptor proteins to form the TR-CD3 (TcR or TCR). The assembly of alpha-beta TR heterodimers with CD3 occurs in the endoplasmic reticulum where a single alpha-beta TR heterodimer associates with one CD3D-CD3E heterodimer, one CD3G-CD3E heterodimer and one CD247 homodimer forming a stable octameric structure. CD3D-CD3E and CD3G-CD3E heterodimers preferentially associate with TR alpha and TR beta chains, respectively. The association of the CD247 homodimer is the last step of TcR assembly in the endoplasmic reticulum and is required for transport to the cell surface.

Its subcellular location is the cell membrane. V region of the variable domain of T cell receptor (TR) alpha chain that participates in the antigen recognition. Alpha-beta T cell receptors are antigen specific receptors which are essential to the immune response and are present on the cell surface of T lymphocytes. Recognize peptide-major histocompatibility (MH) (pMH) complexes that are displayed by antigen presenting cells (APC), a prerequisite for efficient T cell adaptive immunity against pathogens. Binding of alpha-beta TR to pMH complex initiates TR-CD3 clustering on the cell surface and intracellular activation of LCK that phosphorylates the ITAM motifs of CD3G, CD3D, CD3E and CD247 enabling the recruitment of ZAP70. In turn ZAP70 phosphorylates LAT, which recruits numerous signaling molecules to form the LAT signalosome. The LAT signalosome propagates signal branching to three major signaling pathways, the calcium, the mitogen-activated protein kinase (MAPK) kinase and the nuclear factor NF-kappa-B (NF-kB) pathways, leading to the mobilization of transcription factors that are critical for gene expression and essential for T cell growth and differentiation. The T cell repertoire is generated in the thymus, by V-(D)-J rearrangement. This repertoire is then shaped by intrathymic selection events to generate a peripheral T cell pool of self-MH restricted, non-autoaggressive T cells. Post-thymic interaction of alpha-beta TR with the pMH complexes shapes TR structural and functional avidity. This Homo sapiens (Human) protein is T cell receptor alpha variable 3.